The sequence spans 128 residues: MSNNIPAELKYVASHEWLRLEEDGTITVGITHHAQELLGDIVFVELPEVGANLAAEEQAGVVESVKAASDVYAPIAGEVVAVNEDLPSAPETANSDPYGAGWFFKLKPANVADYDSLLTAEQYAGEVD.

The Lipoyl-binding domain maps to 25-107 (TITVGITHHA…YGAGWFFKLK (83 aa)). The residue at position 66 (Lys66) is an N6-lipoyllysine.

This sequence belongs to the GcvH family. In terms of assembly, the glycine cleavage system is composed of four proteins: P, T, L and H. (R)-lipoate is required as a cofactor.

Functionally, the glycine cleavage system catalyzes the degradation of glycine. The H protein shuttles the methylamine group of glycine from the P protein to the T protein. This chain is Glycine cleavage system H protein, found in Neisseria meningitidis serogroup B (strain ATCC BAA-335 / MC58).